The following is a 325-amino-acid chain: Probable cell division protein WhiA (325 aa).

Positions 273 to 306 (SLEELGRLADPPMTKDAVAGRIRRLLSMADRKAK) form a DNA-binding region, H-T-H motif.

It belongs to the WhiA family.

Functionally, involved in cell division and chromosome segregation. The protein is Probable cell division protein WhiA of Mycobacterium bovis (strain BCG / Tokyo 172 / ATCC 35737 / TMC 1019).